The chain runs to 176 residues: Xanthine-guanine phosphoribosyltransferase (176 aa).

5-phospho-alpha-D-ribose 1-diphosphate contacts are provided by residues 51 to 52, R88, and 111 to 119; these read RG and DDLVDSGKT. Residue R88 coordinates GMP. Mg(2+) is bound at residue D112. The guanine site is built by D115 and I158. The xanthine site is built by D115 and I158. Residues 115 to 119 and 157 to 158 contribute to the GMP site; these read DSGKT and WI.

It belongs to the purine/pyrimidine phosphoribosyltransferase family. XGPT subfamily. In terms of assembly, homotetramer. Mg(2+) serves as cofactor.

Its subcellular location is the cell inner membrane. The enzyme catalyses GMP + diphosphate = guanine + 5-phospho-alpha-D-ribose 1-diphosphate. The catalysed reaction is XMP + diphosphate = xanthine + 5-phospho-alpha-D-ribose 1-diphosphate. It catalyses the reaction IMP + diphosphate = hypoxanthine + 5-phospho-alpha-D-ribose 1-diphosphate. The protein operates within purine metabolism; GMP biosynthesis via salvage pathway; GMP from guanine: step 1/1. Its pathway is purine metabolism; XMP biosynthesis via salvage pathway; XMP from xanthine: step 1/1. In terms of biological role, purine salvage pathway enzyme that catalyzes the transfer of the ribosyl-5-phosphate group from 5-phospho-alpha-D-ribose 1-diphosphate (PRPP) to the N9 position of the 6-oxopurines guanine and xanthine to form the corresponding ribonucleotides GMP (guanosine 5'-monophosphate) and XMP (xanthosine 5'-monophosphate), with the release of PPi. To a lesser extent, also acts on hypoxanthine. This Roseobacter denitrificans (strain ATCC 33942 / OCh 114) (Erythrobacter sp. (strain OCh 114)) protein is Xanthine-guanine phosphoribosyltransferase.